The sequence spans 275 residues: Phosphonoacetaldehyde hydrolase (275 aa).

Aspartate 15 serves as the catalytic Nucleophile. Mg(2+) is bound by residues aspartate 15 and alanine 17. The active-site Schiff-base intermediate with substrate is lysine 56. Mg(2+) is bound at residue aspartate 189.

Belongs to the HAD-like hydrolase superfamily. PhnX family. As to quaternary structure, homodimer. The cofactor is Mg(2+).

The catalysed reaction is phosphonoacetaldehyde + H2O = acetaldehyde + phosphate + H(+). Involved in phosphonate degradation. This is Phosphonoacetaldehyde hydrolase from Pseudomonas fluorescens (strain SBW25).